The chain runs to 254 residues: Phosphoglycerate mutase 1 (254 aa).

Residues 10–17 and 23–24 each bind substrate; these read RHGESTWN and SG. Catalysis depends on H11, which acts as the Tele-phosphohistidine intermediate. Phosphoserine is present on residues S14 and S23. Y26 carries the post-translational modification Phosphotyrosine. S31 carries the phosphoserine modification. Residues R62, 89 to 92, and K100 contribute to the substrate site; that span reads ERHY. Catalysis depends on E89, which acts as the Proton donor/acceptor. K106 is modified (N6-acetyllysine). Position 116–117 (116–117) interacts with substrate; sequence RR. A Phosphoserine modification is found at S118. 187-188 contributes to the substrate binding site; sequence GN. K251 carries the N6-acetyllysine; alternate modification. Residue K251 is modified to N6-succinyllysine; alternate. N6-acetyllysine occurs at positions 253 and 254.

This sequence belongs to the phosphoglycerate mutase family. BPG-dependent PGAM subfamily. Homodimer. Acetylated at Lys-253, Lys-253 and Lys-254 under high glucose condition. Acetylation increases catalytic activity. Under glucose restriction SIRT1 levels dramatically increase and it deacetylates the enzyme.

The catalysed reaction is (2R)-2-phosphoglycerate = (2R)-3-phosphoglycerate. It catalyses the reaction (2R)-3-phospho-glyceroyl phosphate = (2R)-2,3-bisphosphoglycerate + H(+). In terms of biological role, catalyzes the interconversion of 2-phosphoglycerate and 3-phosphoglyceratea crucial step in glycolysis, by using 2,3-bisphosphoglycerate. Also catalyzes the interconversion of (2R)-2,3-bisphosphoglycerate and (2R)-3-phospho-glyceroyl phosphate. The protein is Phosphoglycerate mutase 1 of Bos taurus (Bovine).